A 208-amino-acid polypeptide reads, in one-letter code: uncharacterized protein (208 aa).

Residues 118–134 (QYPNQYQQQPQQQQPGY) are compositionally biased toward low complexity. The segment at 118 to 208 (QYPNQYQQQP…HKKEKNEIKE (91 aa)) is disordered. The segment covering 138–175 (NYNQPPVQLNKQAYDNYQQNDYKSNNQPNLAKENNISN) has biased composition (polar residues). Over residues 187–201 (KKEKKHSFFSKLHKK) the composition is skewed to basic residues.

This is an uncharacterized protein from Dictyostelium discoideum (Social amoeba).